The primary structure comprises 206 residues: mRNA-decapping protein D9 (206 aa).

Residues 23 to 206 form the Nudix hydrolase domain; the sequence is KKTHVFAICV…FIYNTLLYSK (184 aa). The Nudix box signature appears at 104-125; that stretch reads GKLNKSETIDDCIRREIKEETD. Position 110 (Glu110) interacts with Mg(2+). The active-site Nucleophile is the Glu119. The Mg(2+) site is built by Glu123 and Asp144.

The protein belongs to the Nudix hydrolase family. Requires Mg(2+) as cofactor. Mn(2+) is required as a cofactor.

Its function is as follows. Decapping enzyme required for the removal of the 5'-end m7GpppN cap tethered to viral and host mRNAs to allow their decay in cells. May therefore accelerate viral and cellular mRNA turnover to eliminate competing host mRNAs and allow stage-specific synthesis of viral proteins. Acceleration of the turnover of cellular transcripts may even promote the shutoff of host protein synthesis. Does not cleave unmethylated RNAs or RNAs shorter than 24 nucleotides. This chain is mRNA-decapping protein D9, found in Oryctolagus cuniculus (Rabbit).